Consider the following 443-residue polypeptide: Probable glycine dehydrogenase (decarboxylating) subunit 1 (443 aa).

Belongs to the GcvP family. N-terminal subunit subfamily. In terms of assembly, the glycine cleavage system is composed of four proteins: P, T, L and H. In this organism, the P 'protein' is a heterodimer of two subunits.

It carries out the reaction N(6)-[(R)-lipoyl]-L-lysyl-[glycine-cleavage complex H protein] + glycine + H(+) = N(6)-[(R)-S(8)-aminomethyldihydrolipoyl]-L-lysyl-[glycine-cleavage complex H protein] + CO2. Functionally, the glycine cleavage system catalyzes the degradation of glycine. The P protein binds the alpha-amino group of glycine through its pyridoxal phosphate cofactor; CO(2) is released and the remaining methylamine moiety is then transferred to the lipoamide cofactor of the H protein. The sequence is that of Probable glycine dehydrogenase (decarboxylating) subunit 1 from Chlorobium limicola (strain DSM 245 / NBRC 103803 / 6330).